Here is a 627-residue protein sequence, read N- to C-terminus: MFGRGLPPLKFGQIGGDGWSTVLADPGNRLIVANAHRSEPRLRVETLIREELLTSRARIEDLERRNRAAHAALDRLAGKAVAIPLRAAAELKNVERPLEAAVELLEDMAERAHHEHEPAVVEDERCRKLSAGDQSGQDAGDDDDAGVIRILKNGSVIPLWKPRTGAKDFHVNFVTMAFAASGDGRVGFGSWYRALQSQLLDSSRGMERILGVSQDGRVSSRLVRAVIRVLRSAAEIYVGHRNYSAFEAAVMCLFQYDAAKRELADAKDGRGSSSGNEPRPASTFEEAIKLVPHYLRALQEDVRREWGAVSYAFDRTKLPQKFFSPVDAKKYSNGALSPHIVYRLFKARGVFAATGREVTKEEIATVDPDFSRFDDPIANLSLAFFPARRSPLSLHEDEPLMRAAIDAVALMMLLQRLMYNSDVYANSMANRFQAAAFFEGRVTGPVAPASGDVYGDRLSGDGDPIRAPGSRPPAAAEATLSGDGSRDVVSLDNNLVFLFDKYLCPMYRYDNRTEMTGFFPGLAAVCLVGKVRGVPSPSSAGDCCSSLINLVDLDLRKTENTGAGAAVVLTVHDAITYDMETGLSRLLSVFDVKKHMKPVLRAMNVETDSDLIYFLCLGCLPHHVTIA.

An interaction with major capsid protein/MCP region spans residues 1–56 (MFGRGLPPLKFGQIGGDGWSTVLADPGNRLIVANAHRSEPRLRVETLIREELLTSR). The tract at residues 458–480 (LSGDGDPIRAPGSRPPAAAEATL) is disordered.

It belongs to the herpesviridae CVC2 protein family. Heterodimerizes with CVC1. Interacts with major capsid protein/MCP and triplex capsid protein 1/TRX1 at the pentamer vertices. Interacts with the large tegument protein/LTP.

Its subcellular location is the virion. The protein resides in the host nucleus. In terms of biological role, capsid vertex-specific component that plays a role during viral DNA encapsidation, assuring correct genome cleavage and presumably stabilizing capsids that contain full-length viral genomes. Participates in the interaction between the capsid and the tegument through interaction with the large tegument protein/LTP. This chain is Capsid vertex component 2, found in Psittacid herpesvirus 1 (isolate Amazon parrot/-/97-0001/1997) (PsHV-1).